The following is a 609-amino-acid chain: UvrABC system protein C (609 aa).

In terms of domain architecture, GIY-YIG spans T15–V92. The region spanning D202–L237 is the UVR domain.

Belongs to the UvrC family. As to quaternary structure, interacts with UvrB in an incision complex.

The protein localises to the cytoplasm. In terms of biological role, the UvrABC repair system catalyzes the recognition and processing of DNA lesions. UvrC both incises the 5' and 3' sides of the lesion. The N-terminal half is responsible for the 3' incision and the C-terminal half is responsible for the 5' incision. The polypeptide is UvrABC system protein C (Coxiella burnetii (strain RSA 493 / Nine Mile phase I)).